Here is a 224-residue protein sequence, read N- to C-terminus: Urease accessory protein UreF (224 aa).

This sequence belongs to the UreF family. UreD, UreF and UreG form a complex that acts as a GTP-hydrolysis-dependent molecular chaperone, activating the urease apoprotein by helping to assemble the nickel containing metallocenter of UreC. The UreE protein probably delivers the nickel.

Its subcellular location is the cytoplasm. Functionally, required for maturation of urease via the functional incorporation of the urease nickel metallocenter. The polypeptide is Urease accessory protein UreF (Enterobacter sp. (strain 638)).